Reading from the N-terminus, the 215-residue chain is MKQELVLRWTFYFAGLIILAFGVSLTIEGKALGISPWDAFHYSLFQHFGLTVGQWSIIIGALIVGFTSLFTRAWPKIGALLNMVLIGVFIDFFNFILPALSTYTGSIIVFSLGVVLIGYGVGVYVSAGLGAGPRDSLMMLITEKTGWNVQWVRNGMELTILFAAWGMGGPIGFGTILTAILTGLILRFSLPQSIQLLNYAVARRTAAVKASPPVH.

Transmembrane regions (helical) follow at residues 9 to 29, 50 to 70, 77 to 97, 107 to 127, and 160 to 180; these read WTFYFAGLIILAFGVSLTIEG, LTVGQWSIIIGALIVGFTSLF, IGALLNMVLIGVFIDFFNFIL, IIVFSLGVVLIGYGVGVYVSA, and ILFAAWGMGGPIGFGTILTAI.

It is found in the cell membrane. This is an uncharacterized protein from Bacillus subtilis (strain 168).